Here is a 447-residue protein sequence, read N- to C-terminus: Phosphatidylinositol N-acetylglucosaminyltransferase subunit A (447 aa).

The Cytoplasmic portion of the chain corresponds to 1 to 387; it reads MAEPPKLRVL…NRSLLERLMR (387 aa). A helical membrane pass occupies residues 388 to 408; that stretch reads FLSCGAWAGKLFCMVMILDYL. The Lumenal portion of the chain corresponds to 409–447; it reads LWRLLQLLQPDEDIEEAPDICLCHHRGVEVSEGLRKKIK.

It belongs to the glycosyltransferase group 1 family. Glycosyltransferase 4 subfamily. In terms of tissue distribution, expressed in roots, stems, leaves, flowers and pollen grains.

The protein localises to the endoplasmic reticulum membrane. It carries out the reaction a 1,2-diacyl-sn-glycero-3-phospho-(1D-myo-inositol) + UDP-N-acetyl-alpha-D-glucosamine = a 6-(N-acetyl-alpha-D-glucosaminyl)-1-(1,2-diacyl-sn-glycero-3-phospho)-1D-myo-inositol + UDP + H(+). The protein operates within glycolipid biosynthesis; glycosylphosphatidylinositol-anchor biosynthesis. In terms of biological role, necessary for the synthesis of N-acetylglucosaminyl-phosphatidylinositol, the very early intermediate in GPI-anchor biosynthesis. Required for pollen germination and pollen tube growth. This Arabidopsis thaliana (Mouse-ear cress) protein is Phosphatidylinositol N-acetylglucosaminyltransferase subunit A.